Consider the following 262-residue polypeptide: Global transcriptional regulator CodY (262 aa).

The segment at 1–159 (MATLLEKTRK…ATTVIGVQLS (159 aa)) is GAF domain. The segment at residues 207 to 226 (ASVIADKIGITRSVIVNALR) is a DNA-binding region (H-T-H motif).

Belongs to the CodY family.

Its subcellular location is the cytoplasm. Functionally, DNA-binding global transcriptional regulator which is involved in the adaptive response to starvation and acts by directly or indirectly controlling the expression of numerous genes in response to nutrient availability. During rapid exponential growth, CodY is highly active and represses genes whose products allow adaptation to nutrient depletion. The protein is Global transcriptional regulator CodY of Lactococcus lactis subsp. lactis (strain IL1403) (Streptococcus lactis).